The sequence spans 678 residues: Catalase (678 aa).

Residues 1-26 are compositionally biased toward basic and acidic residues; sequence MSNEREMQNKKDQQLESFRVEDEGKK. The tract at residues 1-32 is disordered; it reads MSNEREMQNKKDQQLESFRVEDEGKKLTTNQG. Active-site residues include His75 and Asn148. Tyr362 provides a ligand contact to heme.

Belongs to the catalase family. HPII subfamily. Requires heme as cofactor.

Its subcellular location is the cytoplasm. It carries out the reaction 2 H2O2 = O2 + 2 H2O. In terms of biological role, decomposes hydrogen peroxide into water and oxygen; serves to protect cells from the toxic effects of hydrogen peroxide. The polypeptide is Catalase (katE) (Alkalihalophilus pseudofirmus (strain ATCC BAA-2126 / JCM 17055 / OF4) (Bacillus pseudofirmus)).